Reading from the N-terminus, the 605-residue chain is Elongation factor 4 (605 aa).

Residues 9–192 form the tr-type G domain; sequence SRIRNFCIIA…AIIARVPSPA (184 aa). Residues 21-26 and 139-142 each bind GTP; these read DHGKST and NKID.

Belongs to the TRAFAC class translation factor GTPase superfamily. Classic translation factor GTPase family. LepA subfamily.

It localises to the cell inner membrane. It catalyses the reaction GTP + H2O = GDP + phosphate + H(+). In terms of biological role, required for accurate and efficient protein synthesis under certain stress conditions. May act as a fidelity factor of the translation reaction, by catalyzing a one-codon backward translocation of tRNAs on improperly translocated ribosomes. Back-translocation proceeds from a post-translocation (POST) complex to a pre-translocation (PRE) complex, thus giving elongation factor G a second chance to translocate the tRNAs correctly. Binds to ribosomes in a GTP-dependent manner. The polypeptide is Elongation factor 4 (Chlorobium phaeovibrioides (strain DSM 265 / 1930) (Prosthecochloris vibrioformis (strain DSM 265))).